Here is a 682-residue protein sequence, read N- to C-terminus: Tetratricopeptide repeat protein 39B (682 aa).

TPR repeat units lie at residues Ser393–Trp426 and Pro626–Tyr659.

It belongs to the TTC39 family.

In terms of biological role, regulates high density lipoprotein (HDL) cholesterol metabolism by promoting the ubiquitination and degradation of the oxysterols receptors LXR (NR1H2 and NR1H3). This Homo sapiens (Human) protein is Tetratricopeptide repeat protein 39B.